The sequence spans 173 residues: Translation initiation factor IF-3 (173 aa).

It belongs to the IF-3 family. As to quaternary structure, monomer.

Its subcellular location is the cytoplasm. IF-3 binds to the 30S ribosomal subunit and shifts the equilibrium between 70S ribosomes and their 50S and 30S subunits in favor of the free subunits, thus enhancing the availability of 30S subunits on which protein synthesis initiation begins. The chain is Translation initiation factor IF-3 from Methylobacterium sp. (strain 4-46).